The chain runs to 308 residues: ATP synthase gamma chain (308 aa).

The protein belongs to the ATPase gamma chain family. In terms of assembly, F-type ATPases have 2 components, CF(1) - the catalytic core - and CF(0) - the membrane proton channel. CF(1) has five subunits: alpha(3), beta(3), gamma(1), delta(1), epsilon(1). CF(0) has three main subunits: a, b and c.

The protein resides in the cell membrane. Its function is as follows. Produces ATP from ADP in the presence of a proton gradient across the membrane. The gamma chain is believed to be important in regulating ATPase activity and the flow of protons through the CF(0) complex. In Lacticaseibacillus paracasei (strain ATCC 334 / BCRC 17002 / CCUG 31169 / CIP 107868 / KCTC 3260 / NRRL B-441) (Lactobacillus paracasei), this protein is ATP synthase gamma chain.